Consider the following 283-residue polypeptide: uncharacterized protein (283 aa).

A glycan (N-linked (GlcNAc...) asparagine) is linked at N15. The 67-residue stretch at N15 to Q81 folds into the PQ-loop 1 domain. 6 consecutive transmembrane segments (helical) span residues S19–I39, E48–Y68, A108–L128, V138–L158, V170–L190, and G206–L226. The PQ-loop 2 domain occupies A149–D204. N-linked (GlcNAc...) asparagine glycosylation occurs at N228.

It localises to the membrane. This is an uncharacterized protein from Schizosaccharomyces pombe (strain 972 / ATCC 24843) (Fission yeast).